A 432-amino-acid polypeptide reads, in one-letter code: Cyclic GMP-AMP synthase (432 aa).

Residue 110 to 115 (QGSFQY) participates in GTP binding. Residues Asp129 and Asp131 each coordinate Mg(2+). Residue Arg180 participates in ATP binding. Asp191 contributes to the Mg(2+) binding site. Position 255 (Ser255) interacts with ATP. Positions 283, 297, and 344 each coordinate GTP. Positions 413-432 (LNAPSKEPSSKPINKTMVSG) are disordered. The span at 423–432 (KPINKTMVSG) shows a compositional bias: polar residues.

The protein belongs to the CD-NTase family. A01 subfamily. Requires Mg(2+) as cofactor.

It carries out the reaction GTP + ATP = 3',3'-cGAMP + 2 diphosphate. Functionally, cyclic nucleotide synthase (second messenger synthase) of a CBASS antivirus system. CBASS (cyclic oligonucleotide-based antiphage signaling system) provides immunity against bacteriophage. The CD-NTase protein synthesizes cyclic nucleotides in response to infection; these serve as specific second messenger signals. The signals activate a diverse range of effectors, leading to bacterial cell death and thus abortive phage infection. A type II-C(GA) CBASS system. Catalyzes the synthesis of 3'3'-cyclic GMP-AMP (3'3'-cGAMP) from GTP and ATP, a second messenger in cell signal transduction. Is also able to produce c-di-AMP and c-di-GMP from ATP and GTP, respectively; however, 3'3'-cGAMP is the dominant molecule produced by DncV in vivo, contrary to the 2'3'-cGAMP produced by eukaryotes. By producing cGAMP, down-regulates csgD expression and expression of flagellum regulon genes, which leads to the down-regulation of rdar biofilm formation and flagellum-mediated swimming and swarming motility in a temperature-dependent manner. Controls the activity of cGAMP-activated phospholipase CapV, a patatin-like lipase that is a direct 3',3'-cGAMP receptor encoded in the dncV operon. In Escherichia coli, this protein is Cyclic GMP-AMP synthase.